The primary structure comprises 352 residues: Adenosine deaminase (352 aa).

Ala-2 bears the N-acetylalanine mark. Zn(2+)-binding residues include His-15 and His-17. 2 residues coordinate substrate: His-17 and Asp-19. At Lys-54 the chain carries N6-acetyllysine. Residue Gly-184 coordinates substrate. His-214 provides a ligand contact to Zn(2+). Residue Glu-217 is the Proton donor of the active site. Lys-232 is modified (N6-acetyllysine). Asp-295 is a Zn(2+) binding site. Substrate is bound at residue Asp-296.

It belongs to the metallo-dependent hydrolases superfamily. Adenosine and AMP deaminases family. In terms of assembly, interacts with DPP4 (via extracellular domain). Interacts with PLG (via Kringle 4 domain); the interaction stimulates PLG activation when in complex with DPP4. It depends on Zn(2+) as a cofactor. Detected in brain neurons in the median emninence (at protein level). Expressed in secondary deciduum (at protein level). Found in all tissues, occurs in large amounts in T-lymphocytes and, at the time of weaning, in gastrointestinal tissues.

The protein localises to the cell membrane. It localises to the cell junction. Its subcellular location is the cytoplasmic vesicle lumen. The protein resides in the cytoplasm. It is found in the lysosome. The enzyme catalyses adenosine + H2O + H(+) = inosine + NH4(+). The catalysed reaction is 2'-deoxyadenosine + H2O + H(+) = 2'-deoxyinosine + NH4(+). It carries out the reaction cordycepin + H2O + H(+) = 3'-deoxyinosine + NH4(+). Its function is as follows. Catalyzes the hydrolytic deamination of adenosine and 2-deoxyadenosine. Plays an important role in purine metabolism and in adenosine homeostasis. Modulates signaling by extracellular adenosine, and so contributes indirectly to cellular signaling events. Acts as a positive regulator of T-cell coactivation, by binding DPP4. Its interaction with DPP4 regulates lymphocyte-epithelial cell adhesion. Enhances dendritic cell immunogenicity by affecting dendritic cell costimulatory molecule expression and cytokines and chemokines secretion. Enhances CD4+ T-cell differentiation and proliferation. Acts as a positive modulator of adenosine receptors ADORA1 and ADORA2A, by enhancing their ligand affinity via conformational change. Stimulates plasminogen activation. Plays a role in male fertility. Plays a protective role in early postimplantation embryonic development. Also responsible for the deamination of cordycepin (3'-deoxyadenosine), a fungal natural product that shows antitumor, antibacterial, antifungal, antivirus, and immune regulation properties. The protein is Adenosine deaminase (Ada) of Mus musculus (Mouse).